Reading from the N-terminus, the 150-residue chain is Small ribosomal subunit protein uS19y (150 aa).

Belongs to the universal ribosomal protein uS19 family.

The protein localises to the cytoplasm. This is Small ribosomal subunit protein uS19y (RPS15C) from Arabidopsis thaliana (Mouse-ear cress).